The primary structure comprises 313 residues: Porphobilinogen deaminase (313 aa).

S-(dipyrrolylmethanemethyl)cysteine is present on cysteine 242.

It belongs to the HMBS family. As to quaternary structure, monomer. The cofactor is dipyrromethane.

The catalysed reaction is 4 porphobilinogen + H2O = hydroxymethylbilane + 4 NH4(+). The protein operates within porphyrin-containing compound metabolism; protoporphyrin-IX biosynthesis; coproporphyrinogen-III from 5-aminolevulinate: step 2/4. Functionally, tetrapolymerization of the monopyrrole PBG into the hydroxymethylbilane pre-uroporphyrinogen in several discrete steps. This is Porphobilinogen deaminase from Klebsiella pneumoniae subsp. pneumoniae (strain ATCC 700721 / MGH 78578).